The primary structure comprises 570 residues: Protein NRT1/ PTR FAMILY 8.1 (570 aa).

Phosphothreonine is present on T98. A run of 10 helical transmembrane segments spans residues 99 to 119 (IATF…SASV), 140 to 160 (AVFF…KPCV), 182 to 202 (FFNW…TVLV), 210 to 230 (WGWG…FFFF), 329 to 349 (IITL…YSQM), 377 to 397 (LFDT…IIPL), 414 to 434 (MGIG…LEVV), 454 to 474 (IFWQ…TFIG), 494 to 514 (LSLT…TVVM), and 537 to 557 (YFFY…LWIS).

The protein belongs to the major facilitator superfamily. Proton-dependent oligopeptide transporter (POT/PTR) (TC 2.A.17) family. Expressed in cotyledons, hypocotyls, leaves, roots, flowers, pistils and vascular tissue of sepals, anthers, carpels and funiculi. Not detected in seeds.

Its subcellular location is the cell membrane. Functionally, peptide transporter. Mediates the transport of di- and tripeptides. High affinity transporter with low selectivity. No transport of amino acids. The protein is Protein NRT1/ PTR FAMILY 8.1 (NPF8.1) of Arabidopsis thaliana (Mouse-ear cress).